A 447-amino-acid polypeptide reads, in one-letter code: UMP-CMP kinase 2, mitochondrial (447 aa).

A mitochondrion-targeting transit peptide spans 1–73 (MALISRPRAP…ELLGPPGRSY (73 aa)). Residue 259–266 (GLDATGKT) coordinates ATP. Residues 380-412 (EERVRRLQGRGQEKTKEEAELEANNVFRQKVEM) are a coiled coil.

The protein belongs to the thymidylate kinase family. Strongly expressed in the brain.

It localises to the mitochondrion. The enzyme catalyses CMP + ATP = CDP + ADP. It carries out the reaction dCMP + ATP = dCDP + ADP. The catalysed reaction is a 2'-deoxyribonucleoside 5'-diphosphate + ATP = a 2'-deoxyribonucleoside 5'-triphosphate + ADP. It catalyses the reaction a ribonucleoside 5'-diphosphate + ATP = a ribonucleoside 5'-triphosphate + ADP. Mitochondrial nucleotide monophosphate kinase needed for salvage dNTP synthesis that mediates immunomodulatory and antiviral activities through IFN-dependent and IFN-independent pathways. Restricts the replication of multiple viruses including flaviviruses or coronaviruses. Together with viperin/RSAD2 and ddhCTP, suppresses the replication of several coronaviruses through inhibition of the viral RNA-dependent RNA polymerase activities. Concerning flaviviruses, restricts RNA translation when localized to the mitochondria independently of its kinase activity. Is able to phosphorylate dUMP, dCMP, CMP, UMP and monophosphates of the pyrimidine nucleoside analogs ddC, dFdC, araC, BVDU and FdUrd with ATP as phosphate donor. Efficacy is highest for dUMP followed by dCMP while CMP and UMP are poor substrates. Controls therefore mitochondrial DNA synthesis by supplying required deoxyribonucleotides. CMPK2-dependent mitochondrial DNA synthesis is necessary for the production of oxidized mitochondrial DNA fragments after exposure to NLRP3 activators. In turn, cytosolic oxidized mtDNA associates with the NLRP3 inflammasome complex and is required for its activation. The protein is UMP-CMP kinase 2, mitochondrial (Cmpk2) of Mus musculus (Mouse).